The primary structure comprises 472 residues: Aspartyl/glutamyl-tRNA(Asn/Gln) amidotransferase subunit B (472 aa).

It belongs to the GatB/GatE family. GatB subfamily. Heterotrimer of A, B and C subunits.

It carries out the reaction L-glutamyl-tRNA(Gln) + L-glutamine + ATP + H2O = L-glutaminyl-tRNA(Gln) + L-glutamate + ADP + phosphate + H(+). The enzyme catalyses L-aspartyl-tRNA(Asn) + L-glutamine + ATP + H2O = L-asparaginyl-tRNA(Asn) + L-glutamate + ADP + phosphate + 2 H(+). In terms of biological role, allows the formation of correctly charged Asn-tRNA(Asn) or Gln-tRNA(Gln) through the transamidation of misacylated Asp-tRNA(Asn) or Glu-tRNA(Gln) in organisms which lack either or both of asparaginyl-tRNA or glutaminyl-tRNA synthetases. The reaction takes place in the presence of glutamine and ATP through an activated phospho-Asp-tRNA(Asn) or phospho-Glu-tRNA(Gln). This Campylobacter jejuni subsp. jejuni serotype O:2 (strain ATCC 700819 / NCTC 11168) protein is Aspartyl/glutamyl-tRNA(Asn/Gln) amidotransferase subunit B.